The primary structure comprises 70 residues: DNA-directed RNA polymerase subunit omega (70 aa).

This sequence belongs to the RNA polymerase subunit omega family. As to quaternary structure, the RNAP catalytic core consists of 2 alpha, 1 beta, 1 beta' and 1 omega subunit. When a sigma factor is associated with the core the holoenzyme is formed, which can initiate transcription.

It carries out the reaction RNA(n) + a ribonucleoside 5'-triphosphate = RNA(n+1) + diphosphate. In terms of biological role, promotes RNA polymerase assembly. Latches the N- and C-terminal regions of the beta' subunit thereby facilitating its interaction with the beta and alpha subunits. The chain is DNA-directed RNA polymerase subunit omega from Caldanaerobacter subterraneus subsp. tengcongensis (strain DSM 15242 / JCM 11007 / NBRC 100824 / MB4) (Thermoanaerobacter tengcongensis).